Here is a 197-residue protein sequence, read N- to C-terminus: NADH-quinone oxidoreductase subunit C (197 aa).

Belongs to the complex I 30 kDa subunit family. In terms of assembly, NDH-1 is composed of 14 different subunits. Subunits NuoB, C, D, E, F, and G constitute the peripheral sector of the complex.

The protein resides in the cell inner membrane. It catalyses the reaction a quinone + NADH + 5 H(+)(in) = a quinol + NAD(+) + 4 H(+)(out). Its function is as follows. NDH-1 shuttles electrons from NADH, via FMN and iron-sulfur (Fe-S) centers, to quinones in the respiratory chain. The immediate electron acceptor for the enzyme in this species is believed to be ubiquinone. Couples the redox reaction to proton translocation (for every two electrons transferred, four hydrogen ions are translocated across the cytoplasmic membrane), and thus conserves the redox energy in a proton gradient. The sequence is that of NADH-quinone oxidoreductase subunit C from Neisseria meningitidis serogroup C (strain 053442).